Reading from the N-terminus, the 240-residue chain is Octanoyltransferase (240 aa).

One can recognise a BPL/LPL catalytic domain in the interval His49–Arg233. Substrate contacts are provided by residues Arg87 to His94, Ala162 to Gly164, and Gly175 to Ala177. The active-site Acyl-thioester intermediate is Cys193.

The protein belongs to the LipB family.

Its subcellular location is the cytoplasm. The catalysed reaction is octanoyl-[ACP] + L-lysyl-[protein] = N(6)-octanoyl-L-lysyl-[protein] + holo-[ACP] + H(+). The protein operates within protein modification; protein lipoylation via endogenous pathway; protein N(6)-(lipoyl)lysine from octanoyl-[acyl-carrier-protein]: step 1/2. In terms of biological role, catalyzes the transfer of endogenously produced octanoic acid from octanoyl-acyl-carrier-protein onto the lipoyl domains of lipoate-dependent enzymes. Lipoyl-ACP can also act as a substrate although octanoyl-ACP is likely to be the physiological substrate. The protein is Octanoyltransferase of Bradyrhizobium sp. (strain ORS 278).